Here is a 552-residue protein sequence, read N- to C-terminus: Small ribosomal subunit protein bS1 (552 aa).

S1 motif domains follow at residues 31-101, 116-179, 200-268, 285-355, 372-440, and 457-521; these read TIKE…ISQQ, NAII…ISRK, TEPV…LSIK, GYAI…VSLK, GDIV…LSAK, and DSVI…ASVH.

Belongs to the bacterial ribosomal protein bS1 family.

Its function is as follows. Binds mRNA; thus facilitating recognition of the initiation point. It is needed to translate mRNA with a short Shine-Dalgarno (SD) purine-rich sequence. The protein is Small ribosomal subunit protein bS1 (rpsA) of Helicobacter pylori (strain J99 / ATCC 700824) (Campylobacter pylori J99).